The following is a 259-amino-acid chain: MLGAIAYTGNKQSLLPELKSHFPKYNRFVDLFCGGLSVSLNVNGPVLANDIQEPIIEMYKRLINVSWDDVLKVIKQYKLSKTSKEEFLKLREDYNKTRDPLLLYVLHFHGFSNMIRINDKGNFTTPFGKRTINKNSEKQYNHFKQNCDKIIFSSLHFKDVKILDGDFVYVDPPYLITVADYNKFWSEDEEKDLLNLLDSLNDRGIKFGQSNVLEHHGKENTLLKEWSKKYNVKHLNKKYVFNIYHSKEKNGTDEVYIFN.

S-adenosyl-L-methionine contacts are provided by residues Y7, K11, 32-37, D50, 156-157, D171, and Y181; these read FCGGLS and HF.

Belongs to the N(4)/N(6)-methyltransferase family. Monomer.

It catalyses the reaction a 2'-deoxyadenosine in DNA + S-adenosyl-L-methionine = an N(6)-methyl-2'-deoxyadenosine in DNA + S-adenosyl-L-homocysteine + H(+). Functionally, an alpha subtype methylase, recognizes the double-stranded sequence 5'-GATC-3' and methylates A-2. Also acts on 5-hydroxymethylcytosine (hmC)-containing DNA, the normal base in this virus. May prevent degradation of viral DNA by the host restriction-modification antiviral defense system. In Enterobacteria phage T4 (Bacteriophage T4), this protein is DNA adenine methylase.